The sequence spans 92 residues: UPF0235 protein PYRAB05010 (92 aa).

This sequence belongs to the UPF0235 family.

The chain is UPF0235 protein PYRAB05010 from Pyrococcus abyssi (strain GE5 / Orsay).